The following is a 469-amino-acid chain: RuvB-like helicase 2 (469 aa).

73–80 (GEPGTGKT) contributes to the ATP binding site.

It belongs to the RuvB family. In terms of assembly, forms homohexameric rings. May form a dodecamer with rvb1 made of two stacked hexameric rings. Component of the chromatin remodeling Ino80 complex. Component of the RNA polymerase II holoenzyme complex.

It localises to the nucleus. The catalysed reaction is ATP + H2O = ADP + phosphate + H(+). Functionally, has double-stranded DNA-stimulated ATPase and ATP-dependent DNA helicase (5' to 3') activity suggesting a role in nuclear processes such as recombination and transcription. Its function is as follows. Proposed core component of the chromatin remodeling Ino80 complex which is involved in transcriptional regulation, DNA replication and probably DNA repair. The protein is RuvB-like helicase 2 (rvb2) of Dictyostelium discoideum (Social amoeba).